An 879-amino-acid chain; its full sequence is Protein translocase subunit SecA (879 aa).

Residues Q87, 105-109 (GEGKT), and D509 contribute to the ATP site. Residues 834 to 879 (IAEDSEKLKPITGTKKPKRNDPCPCGSGKKYKNCCGQSGPKKGLLA) form a disordered region. C856, C858, C867, and C868 together coordinate Zn(2+).

It belongs to the SecA family. In terms of assembly, monomer and homodimer. Part of the essential Sec protein translocation apparatus which comprises SecA, SecYEG and auxiliary proteins SecDF-YajC and YidC. It depends on Zn(2+) as a cofactor.

The protein resides in the cell inner membrane. The protein localises to the cytoplasm. The catalysed reaction is ATP + H2O + cellular proteinSide 1 = ADP + phosphate + cellular proteinSide 2.. Part of the Sec protein translocase complex. Interacts with the SecYEG preprotein conducting channel. Has a central role in coupling the hydrolysis of ATP to the transfer of proteins into and across the cell membrane, serving as an ATP-driven molecular motor driving the stepwise translocation of polypeptide chains across the membrane. The polypeptide is Protein translocase subunit SecA (Sulfurovum sp. (strain NBC37-1)).